A 45-amino-acid chain; its full sequence is Large ribosomal subunit protein bL34 (45 aa).

Belongs to the bacterial ribosomal protein bL34 family.

The chain is Large ribosomal subunit protein bL34 (rpmH) from Streptomyces bikiniensis.